A 109-amino-acid polypeptide reads, in one-letter code: Nucleoid-associated protein CGSHiEE_00780 (109 aa).

The protein belongs to the YbaB/EbfC family. Homodimer.

Its subcellular location is the cytoplasm. The protein localises to the nucleoid. Functionally, binds to DNA and alters its conformation. May be involved in regulation of gene expression, nucleoid organization and DNA protection. This Haemophilus influenzae (strain PittEE) protein is Nucleoid-associated protein CGSHiEE_00780.